We begin with the raw amino-acid sequence, 94 residues long: Pyrimidine/purine nucleoside phosphorylase (94 aa).

This sequence belongs to the nucleoside phosphorylase PpnP family.

The catalysed reaction is a purine D-ribonucleoside + phosphate = a purine nucleobase + alpha-D-ribose 1-phosphate. It carries out the reaction adenosine + phosphate = alpha-D-ribose 1-phosphate + adenine. It catalyses the reaction cytidine + phosphate = cytosine + alpha-D-ribose 1-phosphate. The enzyme catalyses guanosine + phosphate = alpha-D-ribose 1-phosphate + guanine. The catalysed reaction is inosine + phosphate = alpha-D-ribose 1-phosphate + hypoxanthine. It carries out the reaction thymidine + phosphate = 2-deoxy-alpha-D-ribose 1-phosphate + thymine. It catalyses the reaction uridine + phosphate = alpha-D-ribose 1-phosphate + uracil. The enzyme catalyses xanthosine + phosphate = alpha-D-ribose 1-phosphate + xanthine. Catalyzes the phosphorolysis of diverse nucleosides, yielding D-ribose 1-phosphate and the respective free bases. Can use uridine, adenosine, guanosine, cytidine, thymidine, inosine and xanthosine as substrates. Also catalyzes the reverse reactions. This chain is Pyrimidine/purine nucleoside phosphorylase, found in Salmonella typhimurium (strain LT2 / SGSC1412 / ATCC 700720).